The chain runs to 168 residues: ATP synthase subunit b (168 aa).

A helical transmembrane segment spans residues 11-31; sequence NTVLGNIIVVSGAFIILLVLL.

This sequence belongs to the ATPase B chain family. As to quaternary structure, F-type ATPases have 2 components, F(1) - the catalytic core - and F(0) - the membrane proton channel. F(1) has five subunits: alpha(3), beta(3), gamma(1), delta(1), epsilon(1). F(0) has three main subunits: a(1), b(2) and c(10-14). The alpha and beta chains form an alternating ring which encloses part of the gamma chain. F(1) is attached to F(0) by a central stalk formed by the gamma and epsilon chains, while a peripheral stalk is formed by the delta and b chains.

It is found in the cell membrane. Its function is as follows. F(1)F(0) ATP synthase produces ATP from ADP in the presence of a proton or sodium gradient. F-type ATPases consist of two structural domains, F(1) containing the extramembraneous catalytic core and F(0) containing the membrane proton channel, linked together by a central stalk and a peripheral stalk. During catalysis, ATP synthesis in the catalytic domain of F(1) is coupled via a rotary mechanism of the central stalk subunits to proton translocation. In terms of biological role, component of the F(0) channel, it forms part of the peripheral stalk, linking F(1) to F(0). The protein is ATP synthase subunit b of Lactococcus lactis subsp. lactis (strain IL1403) (Streptococcus lactis).